The primary structure comprises 132 residues: Protein C10 (132 aa).

The residue at position 2 (A2) is an N-acetylalanine.

It belongs to the UPF0456 family.

Its subcellular location is the cytoplasm. In terms of biological role, in brain, may be required for corpus callosum development. The polypeptide is Protein C10 (Bos taurus (Bovine)).